The sequence spans 89 residues: Small ribosomal subunit protein uS15 (89 aa).

It belongs to the universal ribosomal protein uS15 family. In terms of assembly, part of the 30S ribosomal subunit. Forms a bridge to the 50S subunit in the 70S ribosome, contacting the 23S rRNA.

Functionally, one of the primary rRNA binding proteins, it binds directly to 16S rRNA where it helps nucleate assembly of the platform of the 30S subunit by binding and bridging several RNA helices of the 16S rRNA. Its function is as follows. Forms an intersubunit bridge (bridge B4) with the 23S rRNA of the 50S subunit in the ribosome. In Aeromonas hydrophila subsp. hydrophila (strain ATCC 7966 / DSM 30187 / BCRC 13018 / CCUG 14551 / JCM 1027 / KCTC 2358 / NCIMB 9240 / NCTC 8049), this protein is Small ribosomal subunit protein uS15.